A 501-amino-acid polypeptide reads, in one-letter code: MLO-like protein 5 (501 aa).

Topologically, residues 1–22 are extracellular; it reads MAGGGGGSTSGEGPRELDQTPT. The helical transmembrane segment at 23-43 threads the bilayer; the sequence is WAVSTVCGVIILISIVLELMI. The Cytoplasmic segment spans residues 44–68; it reads HKIGEVFTERRKKALYEALQKIKNE. Residues 69–89 traverse the membrane as a helical segment; it reads LMVLGFISLLLTFGQNYIASL. Topologically, residues 90–151 are extracellular; that stretch reads CVASRYGHAM…ISLNALHQVH (62 aa). A helical transmembrane segment spans residues 152 to 172; that stretch reads IFIFFLAVFHVIYSAITMMLG. At 173–273 the chain is on the cytoplasmic side; sequence RAKIRGWKVW…IKRSLEDDFK (101 aa). A helical membrane pass occupies residues 274-294; the sequence is VVVGISPELWAFVMLFLLFDV. Residue His-295 is a topological domain, extracellular. The helical transmembrane segment at 296–316 threads the bilayer; sequence GWYVTAVITMIPPLLTLAIGT. At 317–359 the chain is on the cytoplasmic side; it reads KLQAIISDMALEIQERHAVIQGMPLVNVSDRHFWFSRPALVLH. Residues 360–380 form a helical membrane-spanning segment; it reads IIHFILFQNAFEITYFFWIWY. Over 381–391 the chain is Extracellular; sequence EFGLRSCFHHH. The helical transmembrane segment at 392 to 412 threads the bilayer; sequence FALIIIRVALGVGVQFLCSYI. Residues 413–501 are Cytoplasmic-facing; that stretch reads TLPLYALVTQ…SQSRDLLSGP (89 aa). Residues 443–501 form a disordered region; the sequence is WHKNAKKKSETPGQTQPPLPNLRPKTGGDIESASPANITASVDVKESDQSQSRDLLSGP. Residues 450–471 are calmodulin-binding; the sequence is KSETPGQTQPPLPNLRPKTGGD. Residues 491 to 501 are compositionally biased toward polar residues; the sequence is QSQSRDLLSGP.

This sequence belongs to the MLO family.

It localises to the membrane. May be involved in modulation of pathogen defense and leaf cell death. Activity seems to be regulated by Ca(2+)-dependent calmodulin binding and seems not to require heterotrimeric G proteins. The protein is MLO-like protein 5 (MLO5) of Arabidopsis thaliana (Mouse-ear cress).